The chain runs to 302 residues: tRNA demethylase abh1 (302 aa).

Substrate contacts are provided by residues Trp142 and 149 to 151; that span reads YDW. Residues 187 to 299 enclose the Fe2OG dioxygenase domain; it reads KAEAAIVNFY…RVNFNVRQVR (113 aa). Residue 194–196 coordinates 2-oxoglutarate; that stretch reads NFY. Fe cation is bound by residues His205 and Asp207. Residue Arg235 coordinates substrate. Residue His261 coordinates Fe cation. 290-296 serves as a coordination point for 2-oxoglutarate; the sequence is RVNFNVR.

Belongs to the alkB family. Requires Fe(2+) as cofactor.

The protein localises to the cytoplasm. The protein resides in the nucleus. It carries out the reaction an N(1)-methyladenosine in tRNA + 2-oxoglutarate + O2 = an adenosine in tRNA + formaldehyde + succinate + CO2. The catalysed reaction is N(1)-methyladenosine(58) in tRNA + 2-oxoglutarate + O2 = adenosine(58) in tRNA + formaldehyde + succinate + CO2. Its function is as follows. Dioxygenase that acts as on nucleic acids, such as DNA and tRNA. Requires molecular oxygen, alpha-ketoglutarate and iron. Mainly acts as a tRNA demethylase by removing N(1)-methyladenine from various tRNAs, with a preference for N(1)-methyladenine at position 58 (m1A58) present on a stem loop structure of tRNAs. Acts as a regulator of translation initiation and elongation. Does not appear to possess DNA repair activity; no activity towards methylated DNA or etheno adducts. Exhibits a weak and unstable DNA lyase activity; this activity is probably not biologically significant and proceeds by a mechanism different from the classical dioxygenase reaction as it does not require 2-oxoglutarate or iron. This Schizosaccharomyces pombe (strain 972 / ATCC 24843) (Fission yeast) protein is tRNA demethylase abh1 (abh1).